The sequence spans 371 residues: DNA replication and repair protein RecF (371 aa).

30 to 37 (GQNGMGKT) provides a ligand contact to ATP.

Belongs to the RecF family.

The protein resides in the cytoplasm. Its function is as follows. The RecF protein is involved in DNA metabolism; it is required for DNA replication and normal SOS inducibility. RecF binds preferentially to single-stranded, linear DNA. It also seems to bind ATP. This Phocaeicola vulgatus (strain ATCC 8482 / DSM 1447 / JCM 5826 / CCUG 4940 / NBRC 14291 / NCTC 11154) (Bacteroides vulgatus) protein is DNA replication and repair protein RecF.